A 441-amino-acid polypeptide reads, in one-letter code: Amino-acid acetyltransferase (441 aa).

The N-acetyltransferase domain maps to 295 to 434 (EQVRRATIND…QELYNYQRRS (140 aa)).

This sequence belongs to the acetyltransferase family. ArgA subfamily. As to quaternary structure, homohexamer.

It is found in the cytoplasm. The enzyme catalyses L-glutamate + acetyl-CoA = N-acetyl-L-glutamate + CoA + H(+). The protein operates within amino-acid biosynthesis; L-arginine biosynthesis; N(2)-acetyl-L-ornithine from L-glutamate: step 1/4. The chain is Amino-acid acetyltransferase from Yersinia pseudotuberculosis serotype O:1b (strain IP 31758).